The primary structure comprises 523 residues: 2-isopropylmalate synthase (523 aa).

A Pyruvate carboxyltransferase domain is found at 5 to 267 (VIIFDTTLRD…HTNINHHEIW (263 aa)). 4 residues coordinate Mn(2+): D14, H202, H204, and N238. The interval 392–523 (RLDYFSVQSG…HNKENNKEIV (132 aa)) is regulatory domain.

The protein belongs to the alpha-IPM synthase/homocitrate synthase family. LeuA type 1 subfamily. Homodimer. Requires Mn(2+) as cofactor.

Its subcellular location is the cytoplasm. The catalysed reaction is 3-methyl-2-oxobutanoate + acetyl-CoA + H2O = (2S)-2-isopropylmalate + CoA + H(+). Its pathway is amino-acid biosynthesis; L-leucine biosynthesis; L-leucine from 3-methyl-2-oxobutanoate: step 1/4. Its function is as follows. Catalyzes the condensation of the acetyl group of acetyl-CoA with 3-methyl-2-oxobutanoate (2-ketoisovalerate) to form 3-carboxy-3-hydroxy-4-methylpentanoate (2-isopropylmalate). The chain is 2-isopropylmalate synthase from Salmonella arizonae (strain ATCC BAA-731 / CDC346-86 / RSK2980).